The primary structure comprises 324 residues: tRNA U34 carboxymethyltransferase (324 aa).

Carboxy-S-adenosyl-L-methionine-binding positions include lysine 92, tryptophan 106, lysine 111, glycine 131, 153–155 (DPT), 181–182 (IE), methionine 197, tyrosine 201, and arginine 316.

Belongs to the class I-like SAM-binding methyltransferase superfamily. CmoB family. As to quaternary structure, homotetramer.

The catalysed reaction is carboxy-S-adenosyl-L-methionine + 5-hydroxyuridine(34) in tRNA = 5-carboxymethoxyuridine(34) in tRNA + S-adenosyl-L-homocysteine + H(+). Functionally, catalyzes carboxymethyl transfer from carboxy-S-adenosyl-L-methionine (Cx-SAM) to 5-hydroxyuridine (ho5U) to form 5-carboxymethoxyuridine (cmo5U) at position 34 in tRNAs. This chain is tRNA U34 carboxymethyltransferase, found in Methylococcus capsulatus (strain ATCC 33009 / NCIMB 11132 / Bath).